We begin with the raw amino-acid sequence, 745 residues long: Catalase-peroxidase (745 aa).

Residues 97–223 (WHSAGTYRTG…LAAVQMGLIY (127 aa)) constitute a cross-link (tryptophyl-tyrosyl-methioninium (Trp-Tyr) (with M-249)). The active-site Proton acceptor is H98. Residues 223–249 (YVNPEGPDGSPDPWASARDIRMTFARM) constitute a cross-link (tryptophyl-tyrosyl-methioninium (Tyr-Met) (with W-97)). H264 is a heme b binding site. Residues 345 to 368 (KQWQPVNPKPEDLAPGAHSPDRRV) are disordered.

Belongs to the peroxidase family. Peroxidase/catalase subfamily. In terms of assembly, homodimer or homotetramer. Requires heme b as cofactor. In terms of processing, formation of the three residue Trp-Tyr-Met cross-link is important for the catalase, but not the peroxidase activity of the enzyme.

It carries out the reaction H2O2 + AH2 = A + 2 H2O. It catalyses the reaction 2 H2O2 = O2 + 2 H2O. Its function is as follows. Bifunctional enzyme with both catalase and broad-spectrum peroxidase activity. The sequence is that of Catalase-peroxidase from Phenylobacterium zucineum (strain HLK1).